The primary structure comprises 38 residues: Large ribosomal subunit protein bL36 (38 aa).

The protein belongs to the bacterial ribosomal protein bL36 family.

The polypeptide is Large ribosomal subunit protein bL36 (Stutzerimonas stutzeri (strain A1501) (Pseudomonas stutzeri)).